A 499-amino-acid polypeptide reads, in one-letter code: Glycerol kinase (499 aa).

T13 is a binding site for ADP. ATP contacts are provided by T13, T14, and S15. A sn-glycerol 3-phosphate-binding site is contributed by T13. R17 is a binding site for ADP. The sn-glycerol 3-phosphate site is built by R83, E84, Y135, and D244. Glycerol-binding residues include R83, E84, Y135, D244, and Q245. ADP-binding residues include T266 and G309. The ATP site is built by T266, G309, Q313, and G410. ADP is bound by residues G410 and N414.

It belongs to the FGGY kinase family.

The enzyme catalyses glycerol + ATP = sn-glycerol 3-phosphate + ADP + H(+). It functions in the pathway polyol metabolism; glycerol degradation via glycerol kinase pathway; sn-glycerol 3-phosphate from glycerol: step 1/1. With respect to regulation, inhibited by fructose 1,6-bisphosphate (FBP). Its function is as follows. Key enzyme in the regulation of glycerol uptake and metabolism. Catalyzes the phosphorylation of glycerol to yield sn-glycerol 3-phosphate. This chain is Glycerol kinase, found in Paraburkholderia phymatum (strain DSM 17167 / CIP 108236 / LMG 21445 / STM815) (Burkholderia phymatum).